A 342-amino-acid polypeptide reads, in one-letter code: MKTVSIIGGTGYTGSELLGILANHKDVEVKNVTSRKDSGKKLTKIHPQVKNLKNYNELEFKNLNPENIDTDIVFCATPHGASLKIVPILHEMGINVIDLSGDYRFEDLEMYEAWYGLKHTGKINSVYGLPEIYREKIKKANVIANPGCYPTGAILSMAPLVSNDIVEERIIFDSKSGVSGAGVEATETTHFPNVNENLGPYKLTKHRHSPEIGKELEYLAEKSLKVSFTPHLLPVTRGILTTAHAFLKEDIGRADIVEIYEEFYKNEFFVRIYDEEMISLTGVRSSNFCDIGGFEIDRFGRIVVVSAIDNLVKGASGQAIQNMNILMGFDEKEGLNIGGLRP.

Residue C148 is part of the active site.

Belongs to the NAGSA dehydrogenase family. Type 1 subfamily.

The protein localises to the cytoplasm. The catalysed reaction is N-acetyl-L-glutamate 5-semialdehyde + phosphate + NADP(+) = N-acetyl-L-glutamyl 5-phosphate + NADPH + H(+). It participates in amino-acid biosynthesis; L-arginine biosynthesis; N(2)-acetyl-L-ornithine from L-glutamate: step 3/4. Its function is as follows. Catalyzes the NADPH-dependent reduction of N-acetyl-5-glutamyl phosphate to yield N-acetyl-L-glutamate 5-semialdehyde. The chain is N-acetyl-gamma-glutamyl-phosphate reductase from Methanococcus vannielii (strain ATCC 35089 / DSM 1224 / JCM 13029 / OCM 148 / SB).